The chain runs to 129 residues: Small ribosomal subunit protein uS12 (129 aa).

Disordered regions lie at residues 1–25 (MPTYNQLVRFGRKSKTRKTKSPALE) and 110–129 (RKQGRSRYGAPRKQVAVTKK). Basic residues predominate over residues 10 to 20 (FGRKSKTRKTK).

Belongs to the universal ribosomal protein uS12 family. As to quaternary structure, part of the 30S ribosomal subunit. Contacts proteins S8 and S17. May interact with IF1 in the 30S initiation complex.

Its function is as follows. With S4 and S5 plays an important role in translational accuracy. Functionally, interacts with and stabilizes bases of the 16S rRNA that are involved in tRNA selection in the A site and with the mRNA backbone. Located at the interface of the 30S and 50S subunits, it traverses the body of the 30S subunit contacting proteins on the other side and probably holding the rRNA structure together. The combined cluster of proteins S8, S12 and S17 appears to hold together the shoulder and platform of the 30S subunit. The polypeptide is Small ribosomal subunit protein uS12 (Rickettsia conorii (strain ATCC VR-613 / Malish 7)).